Reading from the N-terminus, the 397-residue chain is 1-deoxy-D-xylulose 5-phosphate reductoisomerase (397 aa).

NADPH is bound by residues T10, G11, S12, I13, G36, K37, N38, and N124. K125 provides a ligand contact to 1-deoxy-D-xylulose 5-phosphate. Residue E126 participates in NADPH binding. Mn(2+) is bound at residue D150. 1-deoxy-D-xylulose 5-phosphate contacts are provided by S151, E152, S186, and H209. Residue E152 participates in Mn(2+) binding. Residue G215 coordinates NADPH. 1-deoxy-D-xylulose 5-phosphate contacts are provided by S222, N227, K228, and E231. E231 is a binding site for Mn(2+).

The protein belongs to the DXR family. As to quaternary structure, homodimer. Mg(2+) serves as cofactor. Requires Mn(2+) as cofactor.

It carries out the reaction 2-C-methyl-D-erythritol 4-phosphate + NADP(+) = 1-deoxy-D-xylulose 5-phosphate + NADPH + H(+). It functions in the pathway isoprenoid biosynthesis; isopentenyl diphosphate biosynthesis via DXP pathway; isopentenyl diphosphate from 1-deoxy-D-xylulose 5-phosphate: step 1/6. In terms of biological role, catalyzes the NADPH-dependent rearrangement and reduction of 1-deoxy-D-xylulose-5-phosphate (DXP) to 2-C-methyl-D-erythritol 4-phosphate (MEP). The chain is 1-deoxy-D-xylulose 5-phosphate reductoisomerase from Proteus mirabilis (strain HI4320).